A 251-amino-acid polypeptide reads, in one-letter code: Enolase-phosphatase E1 (251 aa).

Mg(2+)-binding residues include aspartate 13 and glutamate 15. Substrate contacts are provided by residues 137–138 (SS) and lysine 183. A Mg(2+)-binding site is contributed by aspartate 210.

The protein belongs to the HAD-like hydrolase superfamily. MasA/MtnC family. As to quaternary structure, monomer. Mg(2+) serves as cofactor.

The protein localises to the cytoplasm. The protein resides in the nucleus. It carries out the reaction 5-methylsulfanyl-2,3-dioxopentyl phosphate + H2O = 1,2-dihydroxy-5-(methylsulfanyl)pent-1-en-3-one + phosphate. Its pathway is amino-acid biosynthesis; L-methionine biosynthesis via salvage pathway; L-methionine from S-methyl-5-thio-alpha-D-ribose 1-phosphate: step 3/6. It participates in amino-acid biosynthesis; L-methionine biosynthesis via salvage pathway; L-methionine from S-methyl-5-thio-alpha-D-ribose 1-phosphate: step 4/6. Bifunctional enzyme that catalyzes the enolization of 2,3-diketo-5-methylthiopentyl-1-phosphate (DK-MTP-1-P) into the intermediate 2-hydroxy-3-keto-5-methylthiopentenyl-1-phosphate (HK-MTPenyl-1-P), which is then dephosphorylated to form the acireductone 1,2-dihydroxy-3-keto-5-methylthiopentene (DHK-MTPene). The polypeptide is Enolase-phosphatase E1 (Candida glabrata (strain ATCC 2001 / BCRC 20586 / JCM 3761 / NBRC 0622 / NRRL Y-65 / CBS 138) (Yeast)).